Consider the following 248-residue polypeptide: Sulfur carrier protein FdhD (248 aa).

The Cysteine persulfide intermediate role is filled by Cys99. 232–237 contributes to the Mo-bis(molybdopterin guanine dinucleotide) binding site; the sequence is FVRGKR.

The protein belongs to the FdhD family.

The protein resides in the cytoplasm. In terms of biological role, required for formate dehydrogenase (FDH) activity. Acts as a sulfur carrier protein that transfers sulfur from IscS to the molybdenum cofactor prior to its insertion into FDH. This is Sulfur carrier protein FdhD from Methanothermobacter thermautotrophicus (strain ATCC 29096 / DSM 1053 / JCM 10044 / NBRC 100330 / Delta H) (Methanobacterium thermoautotrophicum).